Reading from the N-terminus, the 386-residue chain is Delta(7)-sterol 5(6)-desaturase (386 aa).

Transmembrane regions (helical) follow at residues 119–139, 172–192, and 206–226; these read VLSLFIITTLFGWLLYFIVAY, IPVMVLLTIPFFLLELHGYSF, and AILWQIPKFILFTDCGIYFLH. The Fatty acid hydroxylase domain occupies 214–337; sequence FILFTDCGIY…FTTLWDRLGN (124 aa). The short motif at 226–230 is the Histidine box-1 element; the sequence is HRWLH. The Histidine box-2 motif lies at 239-243; sequence HKPHH. A helical membrane pass occupies residues 272 to 292; the sequence is PLLFPLHKVLYLLLFTFVNFW. Residues 314 to 318 carry the Histidine box-3 motif; sequence HTVHH.

The protein belongs to the sterol desaturase family. The cofactor is Fe cation.

The protein resides in the endoplasmic reticulum membrane. The catalysed reaction is a Delta(7)-sterol + 2 Fe(II)-[cytochrome b5] + O2 + 2 H(+) = a Delta(5),Delta(7)-sterol + 2 Fe(III)-[cytochrome b5] + 2 H2O. It functions in the pathway steroid metabolism; ergosterol biosynthesis; ergosterol from zymosterol: step 3/5. In terms of biological role, catalyzes the introduction of a C-5 double bond in the B ring of ergosterol. May contribute to the regulation of ergosterol biosynthesis. In Candida dubliniensis (strain CD36 / ATCC MYA-646 / CBS 7987 / NCPF 3949 / NRRL Y-17841) (Yeast), this protein is Delta(7)-sterol 5(6)-desaturase (ERG3).